Reading from the N-terminus, the 581-residue chain is Zinc metalloproteinase nas-36 (581 aa).

The propeptide occupies 1–95 (MKEIAHSQAY…FRGANEKGKR (95 aa)). Asn67 is a glycosylation site (N-linked (GlcNAc...) asparagine). The region spanning 97 to 290 (AAEYDAKWFQ…IKLINEAYCK (194 aa)) is the Peptidase M12A domain. Intrachain disulfides connect Cys137–Cys289, Cys159–Cys178, Cys293–Cys313, Cys315–Cys324, and Cys336–Cys364. His186 is a binding site for Zn(2+). The active site involves Glu187. His190 and His196 together coordinate Zn(2+). The region spanning 285–325 (NEAYCKGDCKEKNECKNGGYLNPSNCQSCLCPSGFGGSKCE) is the EGF-like domain. Residues 336–449 (CGGTLKAIID…TGFKLKFRKT (114 aa)) enclose the CUB domain. A glycan (N-linked (GlcNAc...) asparagine) is linked at Asn418. The region spanning 474 to 523 (NDIWSEWGEWSQCSRSCGACGIKSRLRICKTAQCSGKVQQFLTCNLQACP) is the TSP type-1 domain. 3 disulfides stabilise this stretch: Cys486-Cys517, Cys490-Cys522, and Cys502-Cys507.

It depends on Zn(2+) as a cofactor.

The protein localises to the secreted. Its activity is regulated as follows. Inhibited by 1,10-phenanthroline. Its function is as follows. Metalloprotease. Involved in molting, a process during larval stages in which a new cuticle is formed and the old cuticle is shed. In Brugia malayi (Filarial nematode worm), this protein is Zinc metalloproteinase nas-36.